The primary structure comprises 179 residues: Sec-independent protein translocase protein TatB (179 aa).

A helical membrane pass occupies residues 2–22 (FNGVGWGEVVVLLLIGLFVFG). Residues 98 to 109 (LLGDDPPAAPSL) show a composition bias toward low complexity. The segment at 98–179 (LLGDDPPAAP…TEVPFDSDAT (82 aa)) is disordered.

Belongs to the TatB family. As to quaternary structure, the Tat system comprises two distinct complexes: a TatABC complex, containing multiple copies of TatA, TatB and TatC subunits, and a separate TatA complex, containing only TatA subunits. Substrates initially bind to the TatABC complex, which probably triggers association of the separate TatA complex to form the active translocon.

It localises to the cell membrane. Its function is as follows. Part of the twin-arginine translocation (Tat) system that transports large folded proteins containing a characteristic twin-arginine motif in their signal peptide across membranes. Together with TatC, TatB is part of a receptor directly interacting with Tat signal peptides. TatB may form an oligomeric binding site that transiently accommodates folded Tat precursor proteins before their translocation. The polypeptide is Sec-independent protein translocase protein TatB (Frankia casuarinae (strain DSM 45818 / CECT 9043 / HFP020203 / CcI3)).